The following is a 452-amino-acid chain: UPF0761 membrane protein Bpet3042 (452 aa).

The next 6 membrane-spanning stretches (helical) occupy residues 56-76, 114-134, 153-173, 195-215, 225-245, and 259-279; these read VLGI…FPVF, LTAI…MTID, ALVY…SLWA, AISF…FVVV, ALVG…AFAY, and AFAT…AVLF.

The protein belongs to the UPF0761 family.

Its subcellular location is the cell inner membrane. The sequence is that of UPF0761 membrane protein Bpet3042 from Bordetella petrii (strain ATCC BAA-461 / DSM 12804 / CCUG 43448).